The chain runs to 258 residues: Shikimate dehydrogenase (NADP(+)) (258 aa).

Residues Ser-14–Ser-16 and Thr-61 contribute to the shikimate site. Lys-65 functions as the Proton acceptor in the catalytic mechanism. The shikimate site is built by Asn-86 and Asp-101. NADP(+) contacts are provided by residues Gly-125–Ser-129 and Leu-211. Tyr-213 is a binding site for shikimate. Gly-234 is an NADP(+) binding site.

Belongs to the shikimate dehydrogenase family. As to quaternary structure, homodimer.

The enzyme catalyses shikimate + NADP(+) = 3-dehydroshikimate + NADPH + H(+). The protein operates within metabolic intermediate biosynthesis; chorismate biosynthesis; chorismate from D-erythrose 4-phosphate and phosphoenolpyruvate: step 4/7. Involved in the biosynthesis of the chorismate, which leads to the biosynthesis of aromatic amino acids. Catalyzes the reversible NADPH linked reduction of 3-dehydroshikimate (DHSA) to yield shikimate (SA). The chain is Shikimate dehydrogenase (NADP(+)) from Clostridium botulinum (strain Loch Maree / Type A3).